Consider the following 357-residue polypeptide: NAD kinase 1 (357 aa).

The active-site Proton acceptor is the aspartate 68. NAD(+) contacts are provided by residues 68-69, arginine 73, 175-176, arginine 186, aspartate 205, alanine 240, and glutamine 275; these read DG and ND.

Belongs to the NAD kinase family. Requires a divalent metal cation as cofactor.

It localises to the cytoplasm. It catalyses the reaction NAD(+) + ATP = ADP + NADP(+) + H(+). Functionally, involved in the regulation of the intracellular balance of NAD and NADP, and is a key enzyme in the biosynthesis of NADP. Catalyzes specifically the phosphorylation on 2'-hydroxyl of the adenosine moiety of NAD to yield NADP. The chain is NAD kinase 1 from Streptomyces avermitilis (strain ATCC 31267 / DSM 46492 / JCM 5070 / NBRC 14893 / NCIMB 12804 / NRRL 8165 / MA-4680).